The chain runs to 1007 residues: MSSPPQGSSLASPVQAAAVTGDKTTLLKLIASSPEVIDQEDQLGRTPLMYSVLGDRRSCAEALLKHGAQVNHPDRSGRTALHLAAQTGNHRLLKLLLSRKADCTHRDLRDITAVHLSTRHQDTRCLALILKYTPPGQVDAQDQRKQTALHWSAYYNRPRHVRLLVRHGSNIGIPDTEGKIPLHWAAGHKDPEAALTVRCLLEAAPTESLLNWQDYEGRTPLHLAVGDGNQEVVRLLTSYRGCNVAPYDNLFRTPLHWAALLGYTPIAHLLLETNNSPNIPSDSQGATPLHYAAQGNCPDTVRVLLSHISVRDEADLEGRTAFMWAAGKGSDEVVRTMLELDPELEVNRTDKYGGTALHAASLSGQITTVRILLENRVQVDAVDVMKHTALFRACEMGHREVISTLIKGGAKVHLVDKDGRSPLHWAALGGNANVCQILIENNINPDAQDYEGRTPLQCAAYGGYIGCMEVLMENKADPNIQDKNGRTALHWSCNNGYLDAVKLLLGYSAFPNQMENTEERYTPLDYALLGGHQEVIQFMLEHGALSIAAIQDIAASKIQAVYKGHKVRRAFQERKNLLMKHEQLRKGAAAKKREGENRQKGKVGQTEGKQKDENHVMRQDKSNEHIQNEVMREWYGEETGRAEDRKEEHQEENQNIEPKQLKHSKHMEQNSKSIAKNQKRAGHIQSSPIEHVHTNSIQTRMSPSRTSISHSSPLGNETPKNMYWDDNPTQNNTQPRRTSRPQIESPNIIVHRIEDLVQKESRRKSHREERKGSHRQRASSHHRLQASERETAGSVIHGEVEFKKKETKKGRRTAAGTSKIRASGEAGRLSQSEKEFSSTGIQGRVDCITSPESCETPSRVCRERKMISAKSGQRPLTETQSPEKACQGSSALKPSLTSHTKQTAIASKCLDSTPSYIGFGEAIKPLTPMGILREGSFSSKWQNIDIELIPLEARLQLVEKEKARKQLFQRKKHAATVIQKAWRTYCIRKSSRKTRHSHLRNNPRAMV.

ANK repeat units follow at residues 9–39 (SLASPVQAAAVTGDKTTLLKLIASSPEVIDQ), 43–72 (LGRTPLMYSVLGDRRSCAEALLKHGAQVNH), 76–105 (SGRTALHLAAQTGNHRLLKLLLSRKADCTH), 109–140 (RDITAVHLSTRHQDTRCLALILKYTPPGQVDA), 144–173 (RKQTALHWSAYYNRPRHVRLLVRHGSNIGI), 177–209 (EGKIPLHWAAGHKDPEAALTVRCLLEAAPTESL), 216–246 (EGRTPLHLAVGDGNQEVVRLLTSYRGCNVAP), 250–279 (LFRTPLHWAALLGYTPIAHLLLETNNSPNI), 284–313 (QGATPLHYAAQGNCPDTVRVLLSHISVRDE), 317–346 (EGRTAFMWAAGKGSDEVVRTMLELDPELEV), 352–381 (YGGTALHAASLSGQITTVRILLENRVQVDA), 385–414 (MKHTALFRACEMGHREVISTLIKGGAKVHL), 418–447 (DGRSPLHWAALGGNANVCQILIENNINPDA), 451–480 (EGRTPLQCAAYGGYIGCMEVLMENKADPNI), 484–513 (NGRTALHWSCNNGYLDAVKLLLGYSAFPNQ), and 519–549 (ERYTPLDYALLGGHQEVIQFMLEHGALSIAA). A D-box 1 motif is present at residues 486–494 (RTALHWSCN). An IQ 1 domain is found at 551 to 580 (QDIAASKIQAVYKGHKVRRAFQERKNLLMK). 2 stretches are compositionally biased toward basic and acidic residues: residues 585-599 (RKGAAAKKREGENRQ) and 608-652 (GKQK…HQEE). Disordered regions lie at residues 585–837 (RKGA…KEFS) and 868–893 (SAKSGQRPLTETQSPEKACQGSSALK). The segment covering 684–701 (IQSSPIEHVHTNSIQTRM) has biased composition (polar residues). Residues 702 to 712 (SPSRTSISHSS) show a composition bias toward low complexity. Residues 727–745 (NPTQNNTQPRRTSRPQIES) are compositionally biased toward polar residues. Positions 751-771 (HRIEDLVQKESRRKSHREERK) are enriched in basic and acidic residues. Residues 772 to 784 (GSHRQRASSHHRL) are compositionally biased toward basic residues. The segment covering 870 to 893 (KSGQRPLTETQSPEKACQGSSALK) has biased composition (polar residues). The D-box 2 signature appears at 964 to 972 (RKQLFQRKK). Residues 971–1000 (KKHAATVIQKAWRTYCIRKSSRKTRHSHLR) enclose the IQ 2 domain.

In terms of assembly, interacts with apc2. Binds calmodulin.

Its subcellular location is the cytoplasm. The protein resides in the cytoskeleton. Its function is as follows. Required for normal renal development and establishment of left-right axis. Probably acts as a molecular switch between different Wnt signaling pathways. Inhibits the canonical Wnt pathway by targeting cytoplasmic disheveled for degradation by the ubiquitin-proteasome. This suggests that it is required in renal development to oppose the repression of terminal differentiation of tubular epithelial cells by Wnt signaling. Plays a central role in convergent extension movements in gastrulating embryos, a processus regulated by Wnt signaling. The sequence is that of Inversin-A (invs-a) from Xenopus laevis (African clawed frog).